The following is a 407-amino-acid chain: Patatin-like protein 2 (407 aa).

Positions 22 to 228 (LSIDGGGIRG…AANNPALLAI (207 aa)) constitute a PNPLA domain. Residues 26–31 (GGGIRG) carry the GXGXXG motif. The GXSXG signature appears at 64–68 (GTSTG). Residue S66 is the Nucleophile of the active site. Residue D215 is the Proton acceptor of the active site. The short motif at 215–217 (DGG) is the DGA/G element. S398 is modified (phosphoserine).

Belongs to the patatin family. Expressed specifically in roots.

It localises to the cytoplasm. Functionally, possesses non-specific lipolytic acyl hydrolase (LAH) activity. Catalyzes the hydrolysis of the galactolipids monogalactosyldiacylglycerol (MGDG) and digalactosyldiacylglycerol (DGDG), and less efficiently the phoshpolipids phosphatidylcholine (PC), phosphatidylethanolamine (PE), phosphatidylglycerol (PG), phosphatidic acid (PA), phosphatidylserine (PS) and phosphatidylinositol (PI). Favors the release of fatty acid at the sn-1 position for PC or PE and the sn-2 position for PG, PA, PS and PI. Negatively affects disease resistance to the necrotic fungal pathogen Botrytis cinerea and the avirulent bacteria Pseudomonas syringae by promoting cell death and reducing the efficiency of the hypersensitive response, respectively. However, PLP2 contributes to resistance to cucumber mosaic virus (CMV), an obligate parasite inducing hypersensitive response. May negatively regulate oxylipin production, possibly via participating in membrane repair that includes removal of oxidatively modified lipids. In Arabidopsis thaliana (Mouse-ear cress), this protein is Patatin-like protein 2 (PLP2).